Reading from the N-terminus, the 217-residue chain is MMAAGPRASLLLAFALLCLPWTQEVGAFPAMSLSGLFANAVLRAQHLHQLAADTFKEFERTYIPEGQRYSIQNTQVAFCFSETIPAPTGKNEAQQKSDLELLRISLLLIQSWLGPLQFLSRVFTNSLVFGTSDRVYEKLKDLEEGILALMRELEDGTPRAGQILKQTYDKFDTNMRSDDALLKNYGLLSCFRKDLHKTETYLRVMKCRRFGEASCAF.

A signal peptide spans 1-27 (MMAAGPRASLLLAFALLCLPWTQEVGA). His46 contacts Zn(2+). An intrachain disulfide couples Cys79 to Cys190. A Phosphoserine modification is found at Ser132. Glu199 is a Zn(2+) binding site. Cys207 and Cys215 form a disulfide bridge.

It belongs to the somatotropin/prolactin family.

Its subcellular location is the secreted. Plays an important role in growth control. Its major role in stimulating body growth is to stimulate the liver and other tissues to secrete IGF1. It stimulates both the differentiation and proliferation of myoblasts. It also stimulates amino acid uptake and protein synthesis in muscle and other tissues. In Cervus elaphus (Red deer), this protein is Somatotropin (GH1).